Reading from the N-terminus, the 341-residue chain is Eukaryotic translation initiation factor 2 subunit 1 (341 aa).

The S1 motif domain maps to 18-89 (NELVMVRIES…DKGYIDLSKR (72 aa)). The disordered stretch occupies residues 301-341 (LMEQLEVENQDGDGEEHEDDDDDDDDEEEEEKPKEKKSSRK). Acidic residues predominate over residues 303 to 330 (EQLEVENQDGDGEEHEDDDDDDDDEEEE). Positions 331–341 (EKPKEKKSSRK) are enriched in basic and acidic residues.

Belongs to the eIF-2-alpha family. In terms of assembly, eukaryotic translation initiation factor 2 eIF2 is a heterotrimeric complex composed of an alpha, a beta and a gamma subunit.

The protein resides in the cytoplasm. It is found in the cytosol. Its function is as follows. eIF-2 functions in the early steps of protein synthesis by forming a ternary complex with GTP and initiator tRNA. This complex binds to a 40S ribosomal subunit, followed by mRNA binding to form a 43S pre-initiation complex. Junction of the 60S ribosomal subunit to form the 80S initiation complex is preceded by hydrolysis of the GTP bound to eIF-2 and release of an eIF-2-GDP binary complex. In order for eIF-2 to recycle and catalyze another round of initiation, the GDP bound to eIF-2 must exchange with GTP by way of a reaction catalyzed by eIF2B. This chain is Eukaryotic translation initiation factor 2 subunit 1 (eif2s1), found in Dictyostelium discoideum (Social amoeba).